A 279-amino-acid polypeptide reads, in one-letter code: NADPH-dependent 7-cyano-7-deazaguanine reductase (279 aa).

86 to 88 (IES) is a substrate binding site. 88–89 (SK) serves as a coordination point for NADPH. Cys-187 acts as the Thioimide intermediate in catalysis. The active-site Proton donor is the Asp-194. Position 226–227 (226–227 (HE)) interacts with substrate. NADPH is bound at residue 255 to 256 (RG).

It belongs to the GTP cyclohydrolase I family. QueF type 2 subfamily. As to quaternary structure, homodimer.

The protein localises to the cytoplasm. The catalysed reaction is 7-aminomethyl-7-carbaguanine + 2 NADP(+) = 7-cyano-7-deazaguanine + 2 NADPH + 3 H(+). The protein operates within tRNA modification; tRNA-queuosine biosynthesis. In terms of biological role, catalyzes the NADPH-dependent reduction of 7-cyano-7-deazaguanine (preQ0) to 7-aminomethyl-7-deazaguanine (preQ1). This Haemophilus ducreyi (strain 35000HP / ATCC 700724) protein is NADPH-dependent 7-cyano-7-deazaguanine reductase.